Here is a 71-residue protein sequence, read N- to C-terminus: UPF0352 protein Spea_1764 (71 aa).

The protein belongs to the UPF0352 family.

The protein is UPF0352 protein Spea_1764 of Shewanella pealeana (strain ATCC 700345 / ANG-SQ1).